A 2264-amino-acid chain; its full sequence is MTGHEFKSWILELREILREIKNSHYFLDSWTQFNSVGSFIHIFFHQERFIKLFDSRIWSILLSHNSQGSTSNRYFTIKGVILFGVAVLIYRINNRNMVERKNLYLIGLLPIPMNSIGPRNDTLEESVGSSNINRLIVSLLYLPKGKKIYESSFLNPKESTWVLPITKKCSMPESNWGSRWWRDWIGKKRDSSCKISNETVAGIEILFKEKDLKYLEFFFVYYRDDPIRKDHDWELFDRLSLRKRQNRINLNSGPLFEILVKHWICYLMSAFREKIPIEVEGFFKQQGAGSTIKSNDIEHVSHLFSRNKSAISLQNCAQFHMWQFRQDLFVSWGKNPPESDLLRNVSRENLIWLDNVWLVNKDRFFRKVRNVSSNIQYDSTRSSFVQVRDSSQLKGSSDQSRDHFDSISNEDSEYHTLINQREIQQLKERSILWDPSFLQTEGTEIESNRFPKCLSGYSSMSRLFTEREKQMINHLLPEEIEEFLGNPTRSVRSFFSDRWSEFHLGSNPTERSTRDQKLLKKQQDLSFLRRSENKEMVNLFKIITYLQNTVSIHPISSDSGCDMVPKDEPDMDSSNKISFLNKNPFFDLFHLFHDRNRGGYTLHHDFESEERFQELADLFTLSITEPDLVYHKRFAFSIDSYGLDPKQFLNGVFNSRYEWKTTSLLVLLVLLPIFYEENESFYRRIRKKRVRISCGNDLEEPKPKIVVFASNNIMEAANQYRLIRNLIQIQHSTHRYIRNVLNRFFLMNRSDRNFKYGIQRDQIGKDTLNHRTLMKYMINQHLSNLKKSQKRWFDPLIFFSRTKRSMNRDPDAYRYKWSTGSKNFQEHFVSEQKSRFQVVFDRLRINQYSIDWSEVIDKKDLSKPLRFFLSKLLLFLSNSLPFLFVSFGNIPIHRSEIYIYELKGPNDPQFLESIGLQIVHLKKLKPFLLDDHETCQKSKFLINGGTISPFLFNKIPKWMIDSFHTRNNRRKSFDNTDSYFSMIFHDQYNWLNPVKSFHRSSLRSSFYKANQLRFLNNPHHFCFYCNKRFPFYVEKARINNYDFTYGQFLNILFIRNKIFSLCVGKKKHAFWGRDTISAIESQVSNIFIPKAFPQSGDETYNLYKSFHFPSRSNPFVRRAIYSIADISGTPLTEGQIVNFERTYCQPLSDMNLSDSEGKNLYQYLNFNSNMGLIHTPCYEKYLPSEKRKKRSLCLKKCVEKGQMYRTFQRDSAYSTLSKWNLFQTYMPWFLTSTGYRYLKFLFLDTFSDLLPILSSSQKFVSIFHDIMHGSNISWRILQKKFCLPQRNLISEISSKCLHNLLLSEEMIHRNNESPLISTHLTNVREFLYAILFLLLVAAYLACTRLLFVFGASSELQTEFEKVKSLMIPSSMIELRKLLDRYPTSEPNSFWFLKQLGDSLGGNMLLGGGPAYRVKSIRSKKKYLNINLIDIIDLISIIPNPINRITFSRNTRHLSHTSKEIYSLIRKRKNVNGDWIDDKIESWVANSDSIDDEKREFLVQFSTLTTEKRIDQILLSLTHSDHFSKNDSGYQMIEQPGAIYLRYLVDIHKKYLMNYEFNTSSLAERRIFLAHYQTITYSQTSCGANSLHFPSHGKPFSLRLALSLSRGTLVIGSIGTGRSYLVKYLAKNSYLPFITVFLNKSLDNKSQGFDNIDVDASDDSDASDDIDASDDILDMELELLTSMNALTMDMMPEDEDLLYITLQFELAKAMSPCIIWIPNIHDLDVNESNYLSPGLLVNLLSRDYETRNILVIASTHIPQKVDPALIAPNKLNTCIKIRRLLIPQQRKHFFTLSYTRGFHLEKKMFHTNGFGSITMGSNARDLVALTNEALSISITQNKSIIDTNTIRSALHRQIWDLRSQVRSVQDHGILFYKIGRAVAQNVLLSNCPIDPISIYMKKKSCNEVDYYLYNWYFELGTSMKKLTILLYLLSCSAGSVTQDLWSLPGPDEKNGITPYGLVENDSGLVRGLLEVEGALVGSSRTCSQFDKDRVTLLLRPEPRNPLDMMQNGSCSILDQRFLYEKDESEFEEGDERQQIEEDLFNHIVWAPRIWRPWGFLFDCIERPNELGFPYWSRSFRGKRIVYDEEDELQENDSEFLQNGTVQYQTRDISSKEQGLFRISQFIWDPADPLFFLFKAQPFVSVFSHRELFADEEMSKGLLTPQKNRPTSLYKRWFIKKTQEKHFELLINRQRWLRTNRSLSNGSFRSNTLSESYQYLSNLFLSNGTLLDQMTKALLRKRWLFPDEMQIGFMEQDKDFPFLSQKDMWP.

1611–1618 (GSIGTGRS) provides a ligand contact to ATP.

The protein belongs to the Ycf2 family.

It localises to the plastid. It is found in the chloroplast stroma. Functionally, probable ATPase of unknown function. Its presence in a non-photosynthetic plant (Epifagus virginiana) and experiments in tobacco indicate that it has an essential function which is probably not related to photosynthesis. The protein is Protein Ycf2 of Lactuca sativa (Garden lettuce).